The chain runs to 333 residues: Pro-cathepsin H (333 aa).

An N-terminal signal peptide occupies residues 1-20; the sequence is MWAALPLLCAGAWLLSTGAT. Residues 21–95 constitute a propeptide, activation peptide; sequence AELTVNAIEK…AEIKHKFLWS (75 aa). Asn-70 and Asn-99 each carry an N-linked (GlcNAc...) asparagine glycan. Cystine bridges form between Cys-100–Cys-325, Cys-136–Cys-179, Cys-170–Cys-212, and Cys-270–Cys-320. Residues 104-113 constitute a propeptide that is removed on maturation; it reads KSNYLRGTGP. Residue Cys-139 is part of the active site. Residue Asn-228 is glycosylated (N-linked (GlcNAc...) asparagine). Residues His-279 and Asn-299 contribute to the active site.

This sequence belongs to the peptidase C1 family. Composed of a mini chain and a large chain. The large chain may be split into heavy and light chain. All chains are held together by disulfide bonds. As to expression, widely expressed with highest expression found in non-skeletal tissues. Low levels found in skeletal tissue.

The protein localises to the lysosome. It carries out the reaction Hydrolysis of proteins, acting as an aminopeptidase (notably, cleaving Arg-|-Xaa bonds) as well as an endopeptidase.. In terms of biological role, important for the overall degradation of proteins in lysosomes. The polypeptide is Pro-cathepsin H (Ctsh) (Mus musculus (Mouse)).